Reading from the N-terminus, the 662-residue chain is MPMSSSGYSRTTTHFKMMMATKGKRPLRHLTATDKIDAIQRIHDGESKASVARDIGVPESTLRGWCKNEEKLRYMSRQSAENADKLTSEATAAALTAVAAAELFNGPPEKRMKLEQGLFGKKYDESFYKSPRGMNGLDLSGGGDKGLGVSGGDIIMNGLHGADFSAFAKTAAEISAMGKAKDRYGADLSRNGGGDPGKAELSMAAISPLTSLSHLSGMGGLAQSPLALSFNEIATNLNLIAQLNNNHNLATMSNLGGLTAAQSLRNARPKGNASQSPRASLPDSSGSGGGTPGDKSTPSLTVRNLAKLQQKTSSELQNNGRDPNAPVDEALWYWLKSQQAMLGLNNLYSQMPRPSSPQQPQSTPPTTTTTQQQQPQSSTPPTATPPIVSTPQPTPPSSAPSLTPEDTKNSSWFWQWYKTFGASLMPGDKSCNNNSINATNANNSKYENILYSQLTKGQSPPTTADSLNNNAQPINLNISSNGVVDHLKSEPEDLTTTTNPSMLPPEDHTRFNPSPSTSIKSELKPEVDEDEDEDDEVAKCNGANTAVKQVLDNLLYSQSSPGPVATAPSPLSPSSSTHENGHATPTPLADDLKSTCSEDTDLKSSAEAVEHGEKFLKWLEACSDPNVTAMQVMQFKYLLNSIKLSAERQNGGGEERTRRRRK.

An HTH psq-type domain is found at 21-72 (TKGKRPLRHLTATDKIDAIQRIHDGESKASVARDIGVPESTLRGWCKNEEKL). The segment at residues 48–68 (KASVARDIGVPESTLRGWCKN) is a DNA-binding region (H-T-H motif). Disordered regions lie at residues 265–299 (RNARPKGNASQSPRASLPDSSGSGGGTPGDKSTPS), 348–407 (YSQM…PEDT), 491–537 (PEDL…DDEV), and 558–596 (QSSPGPVATAPSPLSPSSSTHENGHATPTPLADDLKSTC). The span at 349 to 391 (SQMPRPSSPQQPQSTPPTTTTTQQQQPQSSTPPTATPPIVSTP) shows a compositional bias: low complexity. A compositionally biased stretch (polar residues) spans 511–520 (FNPSPSTSIK). Over residues 527–536 (VDEDEDEDDE) the composition is skewed to acidic residues.

As to quaternary structure, homomers. Interacts with itself, danr, ey and dac to form a complex (or complexes) containing the RD factors.

Its subcellular location is the nucleus. Functionally, probable transcription factor with a role in the retinal determination (RD) network. Contributes to differentiation of antenna-specific characteristics. This Culex quinquefasciatus (Southern house mosquito) protein is Protein distal antenna.